A 207-amino-acid polypeptide reads, in one-letter code: Germin-like protein 1 (207 aa).

The N-terminal stretch at 1–17 (MLRIIFLLSLLFALSND) is a signal peptide. A disulfide bond links C23 and C38. One can recognise a Cupin type-1 domain in the interval 51 to 197 (FSLGTPGNTT…TTFLPPATVK (147 aa)). Residue N58 is glycosylated (N-linked (GlcNAc...) asparagine). The Mn(2+) site is built by H99, H101, E106, and H145.

Belongs to the germin family. In terms of assembly, oligomer (believed to be a pentamer but probably hexamer).

The protein localises to the secreted. The protein resides in the extracellular space. It is found in the apoplast. Its function is as follows. May play a role in plant defense. Probably has no oxalate oxidase activity even if the active site is conserved. This is Germin-like protein 1 (GER1) from Brassica napus (Rape).